We begin with the raw amino-acid sequence, 202 residues long: Large ribosomal subunit protein bL25 (202 aa).

This sequence belongs to the bacterial ribosomal protein bL25 family. CTC subfamily. In terms of assembly, part of the 50S ribosomal subunit; part of the 5S rRNA/L5/L18/L25 subcomplex. Contacts the 5S rRNA. Binds to the 5S rRNA independently of L5 and L18.

Its function is as follows. This is one of the proteins that binds to the 5S RNA in the ribosome where it forms part of the central protuberance. This is Large ribosomal subunit protein bL25 from Rickettsia bellii (strain OSU 85-389).